The following is a 521-amino-acid chain: Apolipoprotein N-acyltransferase (521 aa).

Helical transmembrane passes span Leu-34–Val-54, Ala-64–Leu-84, Leu-100–Leu-120, Leu-137–Phe-157, Val-176–Ala-196, and Tyr-206–Ala-226. The region spanning Ile-240 to Leu-480 is the CN hydrolase domain. The Proton acceptor role is filled by Glu-281. Lys-341 is an active-site residue. The active-site Nucleophile is Cys-392. A helical membrane pass occupies residues Ala-488–Ala-508.

It belongs to the CN hydrolase family. Apolipoprotein N-acyltransferase subfamily.

The protein resides in the cell inner membrane. It carries out the reaction N-terminal S-1,2-diacyl-sn-glyceryl-L-cysteinyl-[lipoprotein] + a glycerophospholipid = N-acyl-S-1,2-diacyl-sn-glyceryl-L-cysteinyl-[lipoprotein] + a 2-acyl-sn-glycero-3-phospholipid + H(+). The protein operates within protein modification; lipoprotein biosynthesis (N-acyl transfer). In terms of biological role, catalyzes the phospholipid dependent N-acylation of the N-terminal cysteine of apolipoprotein, the last step in lipoprotein maturation. This Gloeobacter violaceus (strain ATCC 29082 / PCC 7421) protein is Apolipoprotein N-acyltransferase.